The chain runs to 731 residues: E3 ubiquitin-protein ligase SMURF1 (731 aa).

The C2 domain occupies 1–120 (MSNPGTRRNG…TGYQRLDLCK (120 aa)). Residue Ser200 is modified to Phosphoserine. Residues 216–237 (EVRGPLQTPQNRPHGHQSPELP) are disordered. WW domains lie at 234–267 (PELPEGYEQRTTVQGQVYFLHTQTGVSTWHDPRI) and 280–313 (GPLPPGWEVRSTVSGRIYFVDHNNRTTQFTDPRL). Glycyl lysine isopeptide (Lys-Gly) (interchain with G-Cter in ubiquitin) cross-links involve residues Lys355 and Lys357. An HECT domain is found at 394–731 (RPKDLKKRLM…VEETCGFAVE (338 aa)). The active-site Glycyl thioester intermediate is Cys699.

As to quaternary structure, interacts with TRAF4. Interacts (via HECT domain) with FBXL15 (via LRR repeats). Interacts with SMAD7 and TGFBR1; SMAD7 recruits SMURF1 to TGFBR1 and regulates TGF-beta receptor degradation. Interacts with MAVS; the interaction is mediated by NDFIP1. In terms of processing, auto-ubiquitinated in presence of NDFIP1. Ubiquitinated by the SCF(FBXL15) complex at Lys-355 and Lys-357, leading to its degradation by the proteasome. Lys-357 is the primary ubiquitination site.

The protein resides in the cytoplasm. The protein localises to the cell membrane. It catalyses the reaction S-ubiquitinyl-[E2 ubiquitin-conjugating enzyme]-L-cysteine + [acceptor protein]-L-lysine = [E2 ubiquitin-conjugating enzyme]-L-cysteine + N(6)-ubiquitinyl-[acceptor protein]-L-lysine.. The protein operates within protein modification; protein ubiquitination. E3 ubiquitin-protein ligase that acts as a negative regulator of BMP signaling pathway. Mediates ubiquitination and degradation of SMAD1 and SMAD5, 2 receptor-regulated SMADs specific for the BMP pathway. Promotes ubiquitination and subsequent proteasomal degradation of TRAF family members and RHOA. Promotes ubiquitination and subsequent proteasomal degradation of MAVS. Acts as an antagonist of TGF-beta signaling by ubiquitinating TGFBR1 and targeting it for degradation. Plays a role in dendrite formation by melanocytes. This chain is E3 ubiquitin-protein ligase SMURF1 (Smurf1), found in Mus musculus (Mouse).